The chain runs to 317 residues: Glycine--tRNA ligase alpha subunit (317 aa).

This sequence belongs to the class-II aminoacyl-tRNA synthetase family. Tetramer of two alpha and two beta subunits.

It is found in the cytoplasm. The catalysed reaction is tRNA(Gly) + glycine + ATP = glycyl-tRNA(Gly) + AMP + diphosphate. The polypeptide is Glycine--tRNA ligase alpha subunit (Pseudomonas fluorescens (strain ATCC BAA-477 / NRRL B-23932 / Pf-5)).